The sequence spans 448 residues: GTPase Der (448 aa).

EngA-type G domains follow at residues Phe2–Gln171 and Pro181–Ser364. GTP contacts are provided by residues Gly8–Ser15, Asp58–Phe62, Asn123–Asp126, Gly187–Ser194, Asp234–Ile238, and Asn305–Asp308. Residues Lys365–Lys448 form the KH-like domain.

The protein belongs to the TRAFAC class TrmE-Era-EngA-EngB-Septin-like GTPase superfamily. EngA (Der) GTPase family. In terms of assembly, associates with the 50S ribosomal subunit.

In terms of biological role, GTPase that plays an essential role in the late steps of ribosome biogenesis. The chain is GTPase Der from Thermodesulfovibrio yellowstonii (strain ATCC 51303 / DSM 11347 / YP87).